A 245-amino-acid chain; its full sequence is Retrovirus-related Pol polyprotein from type-1 retrotransposable element R1 (245 aa).

Residues 1 to 105 (LKDGTGIVAA…VDLETYCNKA (105 aa)) enclose the Reverse transcriptase domain. Positions 106–245 (EVRQKFREKE…IVRDDSNLEQ (140 aa)) are nucleic acid-binding endonuclease.

It carries out the reaction DNA(n) + a 2'-deoxyribonucleoside 5'-triphosphate = DNA(n+1) + diphosphate. This is Retrovirus-related Pol polyprotein from type-1 retrotransposable element R1 from Popillia japonica (Japanese beetle).